The sequence spans 57 residues: UPF0391 membrane protein RPB_2024 (57 aa).

Transmembrane regions (helical) follow at residues 4–24 (WVVT…GGIA) and 30–50 (IAKV…VVGL).

This sequence belongs to the UPF0391 family.

Its subcellular location is the cell membrane. In Rhodopseudomonas palustris (strain HaA2), this protein is UPF0391 membrane protein RPB_2024.